We begin with the raw amino-acid sequence, 72 residues long: Conotoxin Gla(2)-TxVI/A (72 aa).

Positions 1 to 19 are cleaved as a signal peptide; that stretch reads MQKLIILLLVAAVLMSTQA. A propeptide spanning residues 20-44 is cleaved from the precursor; that stretch reads LFQEKRPMKKIDFLSKGKTDAEKQQ. 3 disulfide bridges follow: Cys48/Cys62, Cys55/Cys66, and Cys61/Cys70. Glu56 is subject to 4-carboxyglutamate. 4-hydroxyproline is present on Pro58. Serine amide is present on Ser71.

This sequence belongs to the conotoxin O2 superfamily. Post-translationally, brominated at one of the Trp residues. In terms of tissue distribution, expressed by the venom duct.

The protein localises to the secreted. The polypeptide is Conotoxin Gla(2)-TxVI/A (Conus textile (Cloth-of-gold cone)).